We begin with the raw amino-acid sequence, 246 residues long: Uridylate kinase (246 aa).

Position 13 to 16 (13 to 16 (KLSG)) interacts with ATP. Gly54 is a UMP binding site. ATP contacts are provided by Gly55 and Arg59. UMP-binding positions include Asp74 and 135 to 142 (AGMPYFST). 3 residues coordinate ATP: Asn163, Tyr169, and Asp172.

It belongs to the UMP kinase family. As to quaternary structure, homohexamer.

Its subcellular location is the cytoplasm. It carries out the reaction UMP + ATP = UDP + ADP. The protein operates within pyrimidine metabolism; CTP biosynthesis via de novo pathway; UDP from UMP (UMPK route): step 1/1. With respect to regulation, inhibited by UTP. Its function is as follows. Catalyzes the reversible phosphorylation of UMP to UDP. This Bifidobacterium longum (strain NCC 2705) protein is Uridylate kinase.